The primary structure comprises 497 residues: Glycerol kinase (497 aa).

An ADP-binding site is contributed by threonine 13. ATP contacts are provided by threonine 13, threonine 14, and serine 15. Threonine 13 contributes to the sn-glycerol 3-phosphate binding site. ADP is bound at residue arginine 17. The sn-glycerol 3-phosphate site is built by arginine 83, glutamate 84, and tyrosine 135. 3 residues coordinate glycerol: arginine 83, glutamate 84, and tyrosine 135. Histidine 231 carries the phosphohistidine; by HPr modification. Aspartate 245 serves as a coordination point for sn-glycerol 3-phosphate. Glycerol contacts are provided by aspartate 245 and glutamine 246. ADP contacts are provided by threonine 267 and glycine 310. ATP-binding residues include threonine 267, glycine 310, glutamine 314, and glycine 411. Positions 411 and 415 each coordinate ADP.

It belongs to the FGGY kinase family. Homotetramer and homodimer (in equilibrium). Post-translationally, the phosphoenolpyruvate-dependent sugar phosphotransferase system (PTS), including enzyme I, and histidine-containing protein (HPr) are required for the phosphorylation, which leads to the activation of the enzyme.

The enzyme catalyses glycerol + ATP = sn-glycerol 3-phosphate + ADP + H(+). It participates in polyol metabolism; glycerol degradation via glycerol kinase pathway; sn-glycerol 3-phosphate from glycerol: step 1/1. Its activity is regulated as follows. Activated by phosphorylation and inhibited by fructose 1,6-bisphosphate (FBP). Key enzyme in the regulation of glycerol uptake and metabolism. Catalyzes the phosphorylation of glycerol to yield sn-glycerol 3-phosphate. In Listeria monocytogenes serotype 4a (strain HCC23), this protein is Glycerol kinase.